The following is a 219-amino-acid chain: Phosphatidylserine decarboxylase proenzyme (219 aa).

The active-site Schiff-base intermediate with substrate; via pyruvic acid is the serine 188. Serine 188 is subject to Pyruvic acid (Ser); by autocatalysis.

The protein belongs to the phosphatidylserine decarboxylase family. PSD-A subfamily. In terms of assembly, heterodimer of a large membrane-associated beta subunit and a small pyruvoyl-containing alpha subunit. Pyruvate is required as a cofactor. Post-translationally, is synthesized initially as an inactive proenzyme. Formation of the active enzyme involves a self-maturation process in which the active site pyruvoyl group is generated from an internal serine residue via an autocatalytic post-translational modification. Two non-identical subunits are generated from the proenzyme in this reaction, and the pyruvate is formed at the N-terminus of the alpha chain, which is derived from the carboxyl end of the proenzyme. The post-translation cleavage follows an unusual pathway, termed non-hydrolytic serinolysis, in which the side chain hydroxyl group of the serine supplies its oxygen atom to form the C-terminus of the beta chain, while the remainder of the serine residue undergoes an oxidative deamination to produce ammonia and the pyruvoyl prosthetic group on the alpha chain.

The protein resides in the cell membrane. The catalysed reaction is a 1,2-diacyl-sn-glycero-3-phospho-L-serine + H(+) = a 1,2-diacyl-sn-glycero-3-phosphoethanolamine + CO2. Its pathway is phospholipid metabolism; phosphatidylethanolamine biosynthesis; phosphatidylethanolamine from CDP-diacylglycerol: step 2/2. Its function is as follows. Catalyzes the formation of phosphatidylethanolamine (PtdEtn) from phosphatidylserine (PtdSer). This Citrifermentans bemidjiense (strain ATCC BAA-1014 / DSM 16622 / JCM 12645 / Bem) (Geobacter bemidjiensis) protein is Phosphatidylserine decarboxylase proenzyme.